Reading from the N-terminus, the 192-residue chain is Leucine-rich repeat-containing protein 51 (192 aa).

LRR repeat units follow at residues 49–71 (SLTQ…NQVA), 80–101 (NLAW…LTTF), and 103–124 (NLSV…NKLA). Positions 137–175 (NPMEEEKGYRQYVLCTLSRITTFDFSGVTKADRTTAEVW) constitute an LRRCT domain.

Its subcellular location is the cytoplasm. The protein is Leucine-rich repeat-containing protein 51 of Homo sapiens (Human).